Reading from the N-terminus, the 118-residue chain is Transcriptional regulator WhiB4 (118 aa).

Residues 36 to 92 (LCRTTDPDELFVRGAAQRKAAVICRHCPVMQECAADALDNKVEFGVWGGMTERQRRA) enclose the 4Fe-4S Wbl-type domain. [4Fe-4S] cluster-binding residues include Cys-37, Cys-59, Cys-62, and Cys-68. 2 cysteine pairs are disulfide-bonded: Cys-37/Cys-68 and Cys-59/Cys-62.

It belongs to the WhiB family. It depends on [4Fe-4S] cluster as a cofactor. Post-translationally, the Fe-S cluster can be nitrosylated by nitric oxide (NO). In terms of processing, upon Fe-S cluster removal intramolecular disulfide bonds are formed.

It is found in the cytoplasm. In terms of biological role, acts as a transcriptional regulator. Probably redox-responsive. The apo- but not holo-form probably binds DNA. This chain is Transcriptional regulator WhiB4 (whiB4), found in Mycobacterium tuberculosis (strain CDC 1551 / Oshkosh).